The chain runs to 272 residues: ATP synthase subunit a (272 aa).

Transmembrane regions (helical) follow at residues 42–62, 108–128, 140–162, 177–197, 219–239, and 241–261; these read IDSLFFSVLLCLLFLVIAGFV, FVWIILMNSMDLIPIDLLPCI, ILPSADINITCAMALNIFALMIF, LIYHPFNYSLCIPINFLLEII, LIFILIAGFLPWWSQWMLSVP, and AIFHILIIILQAFIFMVLTII.

Belongs to the ATPase A chain family. F-type ATPases have 2 components, CF(1) - the catalytic core - and CF(0) - the membrane proton channel. CF(1) has five subunits: alpha(3), beta(3), gamma(1), delta(1), epsilon(1). CF(0) has three main subunits: a(1), b(2) and c(9-12). The alpha and beta chains form an alternating ring which encloses part of the gamma chain. CF(1) is attached to CF(0) by a central stalk formed by the gamma and epsilon chains, while a peripheral stalk is formed by the delta and b chains.

The protein localises to the cell inner membrane. In terms of biological role, key component of the proton channel; it plays a direct role in the translocation of protons across the membrane. The protein is ATP synthase subunit a of Blochmanniella floridana.